Reading from the N-terminus, the 277-residue chain is Thymidylate synthase (277 aa).

Arg-27 contributes to the dUMP binding site. A (6R)-5,10-methylene-5,6,7,8-tetrahydrofolate-binding site is contributed by His-57. DUMP is bound at residue 132-133 (RR). Cys-152 functions as the Nucleophile in the catalytic mechanism. DUMP contacts are provided by residues 179-182 (RSAD), Asn-190, and 220-222 (HIY). Asp-182 provides a ligand contact to (6R)-5,10-methylene-5,6,7,8-tetrahydrofolate. Position 276 (Ala-276) interacts with (6R)-5,10-methylene-5,6,7,8-tetrahydrofolate.

Belongs to the thymidylate synthase family. Bacterial-type ThyA subfamily. As to quaternary structure, homodimer.

The protein resides in the cytoplasm. The enzyme catalyses dUMP + (6R)-5,10-methylene-5,6,7,8-tetrahydrofolate = 7,8-dihydrofolate + dTMP. Its pathway is pyrimidine metabolism; dTTP biosynthesis. Its function is as follows. Catalyzes the reductive methylation of 2'-deoxyuridine-5'-monophosphate (dUMP) to 2'-deoxythymidine-5'-monophosphate (dTMP) while utilizing 5,10-methylenetetrahydrofolate (mTHF) as the methyl donor and reductant in the reaction, yielding dihydrofolate (DHF) as a by-product. This enzymatic reaction provides an intracellular de novo source of dTMP, an essential precursor for DNA biosynthesis. The polypeptide is Thymidylate synthase (Acidovorax sp. (strain JS42)).